A 126-amino-acid chain; its full sequence is Protein ApaG (126 aa).

Residues 2-126 form the ApaG domain; the sequence is RRKPYELKVE…FSLAIPRRLH (125 aa).

The sequence is that of Protein ApaG from Methylococcus capsulatus (strain ATCC 33009 / NCIMB 11132 / Bath).